We begin with the raw amino-acid sequence, 715 residues long: Staphylocoagulase (715 aa).

A signal peptide spans 1–26 (MKKQIISLGALAVASSLFTWDNKADA). The segment covering 306–327 (KYGESETKSPVVKEENKVEDPQ) has biased composition (basic and acidic residues). Disordered regions lie at residues 306-348 (KYGE…EETT) and 430-470 (QGTE…FNKT). Positions 431 to 443 (GTESTLKGIQGES) are enriched in polar residues. 8 tandem repeats follow at residues 495 to 521 (ARPRFNKPSETNAYNVTTNQDGTVSYG), 522 to 548 (ARPTQNKASETNAYNVTTHANGQVSYG), 549 to 575 (ARPTQKKPSETNAYNVTTHANGQVSYG), 576 to 602 (ARPTYNKPSETNAYNVTTHGNGQVSYG), 603 to 629 (ARPTYKKPSKTNAYNVTTHANGQVSYG), 630 to 656 (ARPTQNKPSETNAYNVTTHANGQVSYG), 657 to 683 (ARPTQNKPSETNAYNVTTHGNGQVSYG), and 684 to 710 (ARPTYNKPSKTNAYNVTTHADGTATYG). Residues 495–710 (ARPRFNKPSE…THADGTATYG (216 aa)) form an 8 X 27 AA tandem repeats of A-R-P-[RT]-[FQY]-[NK]-K-[PA]-S-[EK]-T-N-A-Y-N-V-T-T-[NH]-[QAG]-[DN]-G-[TQ]-[VA]-[ST]-Y-G region. Residues 674 to 697 (THGNGQVSYGARPTYNKPSKTNAY) are disordered.

Belongs to the staphylocoagulase family.

Functionally, staphylocoagulase is an extracellular protein which specifically forms a complex with human prothrombin. This complex named staphylothrombin can clot fibrinogen without any proteolytic cleavage of prothrombin. The sequence is that of Staphylocoagulase from Staphylococcus aureus.